The primary structure comprises 709 residues: NAD(P)H-quinone oxidoreductase subunit 5, chloroplastic (709 aa).

A run of 14 helical transmembrane segments spans residues 9–29 (WIIP…LLLF), 40–60 (WAFP…DLSI), 89–109 (IDSL…FVLI), 125–145 (FAYM…SNLI), 147–167 (IYXF…FWFT), 219–239 (NEVH…GAVA), 257–277 (PTPI…IFLV), 280–300 (LLPL…IGII), 327–347 (LGYM…FHLI), 354–374 (ALLF…VGYS), 396–416 (IAFL…CFWS), 425–445 (WLYS…TASY), 540–560 (LFPM…AIPF), and 594–614 (FLTN…TAFL).

This sequence belongs to the complex I subunit 5 family. As to quaternary structure, NDH is composed of at least 16 different subunits, 5 of which are encoded in the nucleus.

It is found in the plastid. The protein localises to the chloroplast thylakoid membrane. The enzyme catalyses a plastoquinone + NADH + (n+1) H(+)(in) = a plastoquinol + NAD(+) + n H(+)(out). It carries out the reaction a plastoquinone + NADPH + (n+1) H(+)(in) = a plastoquinol + NADP(+) + n H(+)(out). Its function is as follows. NDH shuttles electrons from NAD(P)H:plastoquinone, via FMN and iron-sulfur (Fe-S) centers, to quinones in the photosynthetic chain and possibly in a chloroplast respiratory chain. The immediate electron acceptor for the enzyme in this species is believed to be plastoquinone. Couples the redox reaction to proton translocation, and thus conserves the redox energy in a proton gradient. The sequence is that of NAD(P)H-quinone oxidoreductase subunit 5, chloroplastic (ndhF) from Pachira aquatica (Guiana chestnut).